We begin with the raw amino-acid sequence, 444 residues long: Tubulin beta chain (444 aa).

The short motif at 1–4 (MREI) is the MREI motif element. Q11 is a binding site for GTP. A Phosphoserine modification is found at S40. T55 carries the phosphothreonine modification. The residue at position 58 (K58) is an N6-acetyllysine; alternate. Residue K58 is modified to N6-succinyllysine; alternate. K58 is covalently cross-linked (Glycyl lysine isopeptide (Lys-Gly) (interchain with G-Cter in ubiquitin); alternate). GTP contacts are provided by E69, S138, G142, T143, and G144. Mg(2+) is bound at residue E69. S172 carries the phosphoserine; by CDK1 modification. N204 and N226 together coordinate GTP. Residues T285 and T290 each carry the phosphothreonine modification. Position 318 is an omega-N-methylarginine (R318). Residue K324 forms a Glycyl lysine isopeptide (Lys-Gly) (interchain with G-Cter in ubiquitin) linkage. Residues 423–444 (QQYQDATAEEEEDFGEEAEEEA) are disordered. Over residues 429-444 (TAEEEEDFGEEAEEEA) the composition is skewed to acidic residues. A 5-glutamyl polyglutamate mark is found at E434, E438, E439, and E441. 5-glutamyl glycine occurs at positions 438, 439, 441, 442, and 443.

The protein belongs to the tubulin family. In terms of assembly, heterodimer of alpha and beta chains. A typical microtubule is a hollow water-filled tube with an outer diameter of 25 nm and an inner diameter of 15 nM. Alpha-beta heterodimers associate head-to-tail to form protofilaments running lengthwise along the microtubule wall with the beta-tubulin subunit facing the microtubule plus end conferring a structural polarity. Microtubules usually have 13 protofilaments but different protofilament numbers can be found in some organisms and specialized cells. Interacts with CIMAP3. Interacts with DIAPH1. Interacts with MX1. May interact with RNABP10. Interacts with CFAP157. Nascent tubulin polypeptide interacts (via beta-tubulin MREI motif) with TTC5/STRAP; this interaction results in tubulin mRNA-targeted degradation. It depends on Mg(2+) as a cofactor. Some glutamate residues at the C-terminus are polyglycylated, resulting in polyglycine chains on the gamma-carboxyl group. Glycylation is mainly limited to tubulin incorporated into axonemes (cilia and flagella) whereas glutamylation is prevalent in neuronal cells, centrioles, axonemes, and the mitotic spindle. Both modifications can coexist on the same protein on adjacent residues, and lowering polyglycylation levels increases polyglutamylation, and reciprocally. Cilia and flagella glycylation is required for their stability and maintenance. Flagella glycylation controls sperm motility. Post-translationally, some glutamate residues at the C-terminus are polyglutamylated, resulting in polyglutamate chains on the gamma-carboxyl group. Polyglutamylation plays a key role in microtubule severing by spastin (SPAST). SPAST preferentially recognizes and acts on microtubules decorated with short polyglutamate tails: severing activity by SPAST increases as the number of glutamates per tubulin rises from one to eight, but decreases beyond this glutamylation threshold. Glutamylation is also involved in cilia motility. In terms of processing, phosphorylated on Ser-172 by CDK1 during the cell cycle, from metaphase to telophase, but not in interphase. This phosphorylation inhibits tubulin incorporation into microtubules.

Its subcellular location is the cytoplasm. It is found in the cytoskeleton. Its function is as follows. Tubulin is the major constituent of microtubules, a cylinder consisting of laterally associated linear protofilaments composed of alpha- and beta-tubulin heterodimers. Microtubules grow by the addition of GTP-tubulin dimers to the microtubule end, where a stabilizing cap forms. Below the cap, tubulin dimers are in GDP-bound state, owing to GTPase activity of alpha-tubulin. The protein is Tubulin beta chain (TUBB) of Sus scrofa (Pig).